Here is a 365-residue protein sequence, read N- to C-terminus: Sulfotransferase 2B1 (365 aa).

Residue 70-75 coordinates 3'-phosphoadenylyl sulfate; it reads KSGTTW. The substrate site is built by Trp98, Trp103, and His125. The active-site Proton acceptor is His125. Residues Arg147, Ser155, Tyr210, 244-249, and 274-276 contribute to the 3'-phosphoadenylyl sulfate site; these read STFSAM and RKG. The interval 303 to 365 is disordered; the sequence is GMPTFPWDED…ASETPHPRPS (63 aa). The segment covering 309–325 has biased composition (acidic residues); it reads WDEDPEEDGSPDPEPSP. Ser348 is subject to Phosphoserine.

Belongs to the sulfotransferase 1 family. In terms of processing, phosphorylated. Expressed in the stratum granulosum-stratum corneum junction in the skin (at protein level). Expressed highly in placenta, prostate and trachea and lower expression in the small intestine and lung.

The protein localises to the cytoplasm. The protein resides in the cytosol. It is found in the microsome. It localises to the nucleus. It carries out the reaction an alcohol + 3'-phosphoadenylyl sulfate = an alkyl sulfate + adenosine 3',5'-bisphosphate + H(+). It catalyses the reaction 3beta-hydroxyandrost-5-en-17-one + 3'-phosphoadenylyl sulfate = dehydroepiandrosterone 3-sulfate + adenosine 3',5'-bisphosphate + H(+). The catalysed reaction is (24S)-hydroxycholesterol + 3'-phosphoadenylyl sulfate = (24S)-hydroxycholesterol 3-sulfate + adenosine 3',5'-bisphosphate + H(+). The enzyme catalyses cholesterol + 3'-phosphoadenylyl sulfate = cholesterol sulfate + adenosine 3',5'-bisphosphate + H(+). It carries out the reaction pregnenolone + 3'-phosphoadenylyl sulfate = pregnenolone sulfate + adenosine 3',5'-bisphosphate + H(+). Its function is as follows. Sulfotransferase that utilizes 3'-phospho-5'-adenylyl sulfate (PAPS) as sulfonate donor to catalyze the sulfate conjugation. Responsible for the sulfation of cholesterol. Catalyzes sulfation of the 3beta-hydroxyl groups of steroids, such as, pregnenolone and dehydroepiandrosterone (DHEA). Preferentially sulfonates cholesterol, while it also has significant activity with pregnenolone and DHEA. Plays a role in epidermal cholesterol metabolism and in the regulation of epidermal proliferation and differentiation. Sulfonates pregnenolone but not cholesterol. The protein is Sulfotransferase 2B1 (SULT2B1) of Homo sapiens (Human).